The following is a 538-amino-acid chain: Bifunctional purine biosynthesis protein PurH (538 aa).

An MGS-like domain is found at 8–158 (IPAPDLVPVR…KNHAYVAIVT (151 aa)).

This sequence belongs to the PurH family.

It catalyses the reaction (6R)-10-formyltetrahydrofolate + 5-amino-1-(5-phospho-beta-D-ribosyl)imidazole-4-carboxamide = 5-formamido-1-(5-phospho-D-ribosyl)imidazole-4-carboxamide + (6S)-5,6,7,8-tetrahydrofolate. The catalysed reaction is IMP + H2O = 5-formamido-1-(5-phospho-D-ribosyl)imidazole-4-carboxamide. It participates in purine metabolism; IMP biosynthesis via de novo pathway; 5-formamido-1-(5-phospho-D-ribosyl)imidazole-4-carboxamide from 5-amino-1-(5-phospho-D-ribosyl)imidazole-4-carboxamide (10-formyl THF route): step 1/1. The protein operates within purine metabolism; IMP biosynthesis via de novo pathway; IMP from 5-formamido-1-(5-phospho-D-ribosyl)imidazole-4-carboxamide: step 1/1. This Mesorhizobium japonicum (strain LMG 29417 / CECT 9101 / MAFF 303099) (Mesorhizobium loti (strain MAFF 303099)) protein is Bifunctional purine biosynthesis protein PurH.